The following is a 122-amino-acid chain: Urease subunit beta (122 aa).

This sequence belongs to the urease beta subunit family. In terms of assembly, heterotrimer of UreA (gamma), UreB (beta) and UreC (alpha) subunits. Three heterotrimers associate to form the active enzyme.

It is found in the cytoplasm. It catalyses the reaction urea + 2 H2O + H(+) = hydrogencarbonate + 2 NH4(+). Its pathway is nitrogen metabolism; urea degradation; CO(2) and NH(3) from urea (urease route): step 1/1. The protein is Urease subunit beta of Flavobacterium johnsoniae (strain ATCC 17061 / DSM 2064 / JCM 8514 / BCRC 14874 / CCUG 350202 / NBRC 14942 / NCIMB 11054 / UW101) (Cytophaga johnsonae).